An 858-amino-acid chain; its full sequence is Coiled-coil and C2 domain-containing protein 1B (858 aa).

5 disordered regions span residues 112–164, 180–199, 204–284, 329–352, and 470–533; these read VLGV…GASQ, AAAS…CERG, ESQL…ALLS, VDLS…APTA, and EKLA…SPSV. The span at 114–143 shows a compositional bias: acidic residues; sequence GVDEETEPLDGDEVADPGGSEEENGLEDTE. Residues 153–164 show a composition bias toward low complexity; it reads ASAPAAQAGASQ. The stretch at 166 to 212 forms a coiled coil; the sequence is LHALLEERIHNYREAAASAKEAGEAAKARRCERGLKTLESQLASVRR. Over residues 186-199 the composition is skewed to basic and acidic residues; sequence EAGEAAKARRCERG. At Ser-209 the chain carries Phosphoserine. A compositionally biased stretch (low complexity) spans 520–532; the sequence is PRASSSKESPSPS. Residue Ser-593 is modified to Phosphoserine. A Phosphothreonine modification is found at Thr-596. Residues 611–635 are a coiled coil; that stretch reads RLSQKAEEVYAQLQKMLLEQQEKCL. The region spanning 676 to 815 is the C2 domain; the sequence is DPPTHHFELK…ENECEIREIV (140 aa).

This sequence belongs to the CC2D1 family. In terms of assembly, interacts with CHMP4B. In terms of tissue distribution, widely distributed in brain and peripheral tissues.

It localises to the nucleus. In terms of biological role, transcription factor that binds specifically to the DRE (dual repressor element) and represses HTR1A gene transcription in neuronal cells. The chain is Coiled-coil and C2 domain-containing protein 1B (CC2D1B) from Homo sapiens (Human).